Reading from the N-terminus, the 361-residue chain is RLA class I histocompatibility antigen, alpha chain 11/11 (361 aa).

Positions 1 to 24 (MGSMAPRTLLLLLAGALTLKDTQA) are cleaved as a signal peptide. Residues 25-114 (GSHSMRYFYT…ALRYYNQSAA (90 aa)) form an alpha-1 region. Topologically, residues 25–308 (GSHSMRYFYT…EPPAQPTALI (284 aa)) are extracellular. N-linked (GlcNAc...) asparagine glycosylation is present at Asn-110. Residues 115–206 (GSHTFQTMFG…EMGKETLQRA (92 aa)) are alpha-2. Intrachain disulfides connect Cys-125–Cys-188 and Cys-227–Cys-283. The tract at residues 207-298 (DPPKAHVTHH…GLPEPLTLTW (92 aa)) is alpha-3. One can recognise an Ig-like C1-type domain in the interval 209–297 (PKAHVTHHPA…EGLPEPLTLT (89 aa)). The connecting peptide stretch occupies residues 299-308 (EPPAQPTALI). A helical membrane pass occupies residues 309–329 (VGIVAGVLGVLLILGAVVAVV). Over 330–361 (RRKKHSSDGKGGRYTPAAGGHRDQGSDDSLMP) the chain is Cytoplasmic. The segment at 335-361 (SSDGKGGRYTPAAGGHRDQGSDDSLMP) is disordered. 2 positions are modified to phosphoserine: Ser-355 and Ser-358.

The protein belongs to the MHC class I family. Heterodimer of an alpha chain and a beta chain (beta-2-microglobulin).

The protein resides in the membrane. Its function is as follows. Involved in the presentation of foreign antigens to the immune system. This Oryctolagus cuniculus (Rabbit) protein is RLA class I histocompatibility antigen, alpha chain 11/11.